The sequence spans 390 residues: Cyclic amide hydrolase (390 aa).

The interval 1 to 118 is RU A; the sequence is MPNPEASLSP…TVVTQEWVAD (118 aa). Substrate contacts are provided by residues Arg-66 and 97–98; that span reads SG. The segment at 127–268 is RU B; the sequence is GLVVGRGHTE…GEVLLLANSA (142 aa). Lys-177 is a catalytic residue. Substrate contacts are provided by residues Asn-213, 251–252, Lys-346, and 365–366; these read SS and SG. Residue Ser-251 is the Nucleophile of the active site. Residues 274-390 are RU C; it reads LRIGHGITRD…VAAVVRRLPA (117 aa).

Belongs to the cyclic amide hydrolase (CyAH) family. In terms of assembly, homotetramer; disulfide-linked. The disulfide forms between 2 monomers in the tetramer, such that each tetramer contains 2 sets of vicinal disulfides.

In terms of biological role, cyclic amide hydrolase of unknown substrate specificity. Catalyzes the hydrolytic ring-opening of a cyclic amide. Does not act on cyanuric acid nor barbituric acid. This Pseudofrankia inefficax (strain DSM 45817 / CECT 9037 / DDB 130130 / EuI1c) (Frankia inefficax) protein is Cyclic amide hydrolase.